A 345-amino-acid polypeptide reads, in one-letter code: Transcription factor STKL1 (345 aa).

Residues 1 to 145 form a disordered region; sequence MASLENPAID…KKGHAQRVWS (145 aa). Positions 11-22 are enriched in low complexity; that stretch reads SSSEFESSSEEI. Over residues 23–32 the composition is skewed to basic and acidic residues; the sequence is SSSKESKPKE. Polar residues predominate over residues 37-46; sequence VPSTKTLNSP. S105 bears the Phosphoserine mark. Basic and acidic residues predominate over residues 114–137; sequence RASEGTTSRDMHVKRIKKEGDNKK.

Belongs to the GeBP family. In terms of tissue distribution, expressed strongly in leaves and flowers, weakly in roots, and very weakly in stems.

Its subcellular location is the nucleus. Its function is as follows. Transcription repressor that binds DNA in a sequence-specific manner, 5'-GCCT-3', to regulate the expression of PGR. Acts as a modulatory component for the glucose-triggered developmental leaf growth process. This Arabidopsis thaliana (Mouse-ear cress) protein is Transcription factor STKL1.